A 1093-amino-acid chain; its full sequence is Synaptopodin-2 (1093 aa).

The segment at 1 to 180 is interaction with VPS18; it reads MGTGDFICIS…PDSQRGRVAE (180 aa). A PDZ domain is found at 6 to 88; it reads FICISMTGGA…SLQMLIKRPS (83 aa). Disordered stretches follow at residues 144 to 174 and 211 to 233; these read ENQRSGPDCAGSLKEETGPSYQRAPQMPDSQ and ASGPLVALPGAEKSKSPDPDPNL. The span at 222–233 shows a compositional bias: basic and acidic residues; sequence EKSKSPDPDPNL. A phosphoserine mark is found at Ser-274, Ser-310, Ser-329, and Ser-330. Residues 329–369 form a disordered region; the sequence is SSEGTEQGEDPRSEKDHSRPHKHRARHARLRRSESLSEKQV. Residue Thr-333 is modified to Phosphothreonine. Residues 346 to 358 are compositionally biased toward basic residues; that stretch reads SRPHKHRARHARL. Over residues 359–369 the composition is skewed to basic and acidic residues; the sequence is RRSESLSEKQV. The short motif at 398–406 is the Nuclear localization signal element; it reads KKRRRRARK. Interaction with ACTN2 stretches follow at residues 481 to 663, 664 to 924, and 901 to 1093; these read MEML…FYDS, SERI…PPVA, and QSPT…VVEE. Disordered regions lie at residues 507–803 and 834–870; these read AQKE…GTVV and AVASQNYTPKPTVSTPTVNAVQPGAVGPSNELPGMSG. 2 F-actin binding regions span residues 534 to 663 and 664 to 803; these read TSYQ…FYDS and SERI…GTVV. Phosphoserine is present on residues Ser-548, Ser-549, and Ser-551. Polar residues-rich tracts occupy residues 565–579 and 595–611; these read PQQNGFSGTSETANI and SVNQPATPFSPTRNMTS. A Phosphoserine modification is found at Ser-604. The segment at 607–811 is interaction with YWHAB; sequence RNMTSPIADF…VVSSIKIAQP (205 aa). Position 610 is a phosphothreonine (Thr-610). Ser-611 is subject to Phosphoserine. Residues 615 to 626 form an interaction with BAG3 region; that stretch reads DFPAPPPYSAVT. 2 stretches are compositionally biased toward pro residues: residues 617 to 630 and 644 to 655; these read PAPPPYSAVTPPPD and AQPPPWPQPAPW. Residues 619–622 carry the PPPY motif motif; sequence PPPY. Residue Tyr-622 is modified to Phosphotyrosine. Position 626 is a phosphothreonine (Thr-626). Over residues 663–674 the composition is skewed to basic and acidic residues; the sequence is SSERIASRDERI. The tract at residues 664–916 is F-actin bundling activity; that stretch reads SERIASRDER…LPASWKYSSN (253 aa). Phosphoserine is present on residues Ser-705 and Ser-729. The actin binding stretch occupies residues 751 to 900; that stretch reads AKQKTPPPVA…DTVQAHAARA (150 aa). Phosphothreonine occurs at positions 755 and 774. Positions 762–784 are enriched in low complexity; it reads KPAVKSSSSQPVTPVSPVWSPGV. Ser-777 and Ser-781 each carry phosphoserine. 2 stretches are compositionally biased toward polar residues: residues 793–803 and 835–853; these read PTSNPSKGTVV and VASQNYTPKPTVSTPTVNA. Residues 810–1093 are interaction with FLNC; sequence QPSYPPARPA…QVWKPSVVEE (284 aa). Phosphoserine occurs at positions 902, 906, and 910. The disordered stretch occupies residues 937 to 956; that stretch reads ALKSQPSAAQPSKMGKKKGK. Residues 1000–1019 are interaction with ZYX; the sequence is LAMKQALPPRPVNAASPTNV. Ser-1015 carries the phosphoserine modification. A compositionally biased stretch (low complexity) spans 1041 to 1050; it reads SSPVSASPVP. Residues 1041-1064 form a disordered region; the sequence is SSPVSASPVPVGIPTSPKQESASS. Residue Ser-1056 is modified to Phosphoserine.

It belongs to the synaptopodin family. In terms of assembly, may self-associate in muscle cells under oxidative stress. Binds F-actin. Interacts with ACTN2; ACTN2 is proposed to anchor SYOP2 at Z lines in mature myocytes. Interacts with AKAP6, PPP3CA and CAMK2A. Interacts (phosphorylated form) with YWHAB; YWHAB competes with ACTN2 for interaction with SYNPO2. Interacts with KPNA2; mediating nuclear import of SYNOP2; dependent on interaction with YWHAB. Interacts with IPO13; may be implicated in SYNOP2 nuclear import. Interacts with ZYX, FLNC, ILK. Interacts with BAG3 (via WW 1 domain). May associate with the CASA complex consisting of HSPA8, HSPB8 and BAG3. Interacts with VPS18. In terms of processing, phosphorylated by PKA, and by CaMK2 at multiple sites. Dephosphorylated by calcineurin; abrogating interaction with YWHAB and impairing nuclear import. Phosphorylated by ILK. In terms of tissue distribution, expressed in heart muscle. Isoform 5 is specifically expressed in skeletal muscle.

It localises to the nucleus. Its subcellular location is the cytoplasm. The protein localises to the cytoskeleton. The protein resides in the myofibril. It is found in the sarcomere. It localises to the z line. Its subcellular location is the cell junction. The protein localises to the focal adhesion. In terms of biological role, has an actin-binding and actin-bundling activity. Can induce the formation of F-actin networks in an isoform-specific manner. At the sarcomeric Z lines is proposed to act as adapter protein that links nascent myofibers to the sarcolemma via ZYX and may play a role in early assembly and stabilization of the Z lines. Involved in autophagosome formation. May play a role in chaperone-assisted selective autophagy (CASA) involved in Z lines maintenance in striated muscle under mechanical tension; may link the client-processing CASA chaperone machinery to a membrane-tethering and fusion complex providing autophagosome membranes. Involved in regulation of cell migration. May be a tumor suppressor. Functionally, involved in regulation of cell migration. Can induce formation of thick, irregular actin bundles in the cell body. Its function is as follows. Involved in regulation of cell migration. Can induce long, well-organized actin bundles frequently orientated in parallel along the long axis of the cell showing characteristics of contractile ventral stress fibers. Involved in regulation of cell migration. Can induce an amorphous actin meshwork throughout the cell body containing a mixture of long and short, randomly organized thick and thin actin bundles. In terms of biological role, can induce long, well-organized actin bundles frequently orientated in parallel along the long axis of the cell showing characteristics of contractile ventral stress fibers. Functionally, involved in regulation of cell migration in part dependent on the Rho-ROCK cascade; can promote formation of nascent focal adhesions, actin bundles at the leading cell edge and lamellipodia. Can induce formation of thick, irregular actin bundles in the cell body; the induced actin network is associated with enhanced cell migration in vitro. In Homo sapiens (Human), this protein is Synaptopodin-2 (SYNPO2).